Here is a 451-residue protein sequence, read N- to C-terminus: Chromosomal replication initiator protein DnaA (451 aa).

Residues 1–101 form a domain I, interacts with DnaA modulators region; it reads MTENETIFWN…TSNHIFSRQT (101 aa). Residues 101–110 form a domain II region; the sequence is TINSLPAITS. Residues 111–329 form a domain III, AAA+ region region; the sequence is DLNPKYSFDN…GALKDISLVA (219 aa). ATP contacts are provided by Gly-155, Gly-157, Lys-158, and Thr-159. The segment at 330-451 is domain IV, binds dsDNA; the sequence is NFKEIDKITV…EIETIKNKIK (122 aa).

The protein belongs to the DnaA family. In terms of assembly, oligomerizes as a right-handed, spiral filament on DNA at oriC.

It is found in the cytoplasm. Its function is as follows. Plays an essential role in the initiation and regulation of chromosomal replication. ATP-DnaA binds to the origin of replication (oriC) to initiate formation of the DNA replication initiation complex once per cell cycle. Binds the DnaA box (a 9 base pair repeat at the origin) and separates the double-stranded (ds)DNA. Forms a right-handed helical filament on oriC DNA; dsDNA binds to the exterior of the filament while single-stranded (ss)DNA is stabiized in the filament's interior. The ATP-DnaA-oriC complex binds and stabilizes one strand of the AT-rich DNA unwinding element (DUE), permitting loading of DNA polymerase. After initiation quickly degrades to an ADP-DnaA complex that is not apt for DNA replication. Binds acidic phospholipids. The polypeptide is Chromosomal replication initiator protein DnaA (Streptococcus uberis (strain ATCC BAA-854 / 0140J)).